The primary structure comprises 142 residues: Small ribosomal subunit protein bS16 (142 aa).

The segment at 101–142 (RPSFDALGGDDAGKGEAITQKKKAEKKDEAAAESSSSESTEA) is disordered. Residues 132-142 (AESSSSESTEA) are compositionally biased toward low complexity.

The protein belongs to the bacterial ribosomal protein bS16 family.

In Streptomyces avermitilis (strain ATCC 31267 / DSM 46492 / JCM 5070 / NBRC 14893 / NCIMB 12804 / NRRL 8165 / MA-4680), this protein is Small ribosomal subunit protein bS16.